The following is an 862-amino-acid chain: Eukaryotic translation initiation factor 3 subunit C (862 aa).

Residues 1–81 (MSSRFFYGGG…EEEEKVTVVK (81 aa)) are disordered. Acidic residues predominate over residues 17 to 54 (SSDEEELYSDREEEEKSEEEESSEEEDETSEEEESDEE). Residues 55-65 (TGAKKFLKDVA) show a composition bias toward basic and acidic residues. Residues 66–75 (SDSEEEEEEE) are compositionally biased toward acidic residues. Residues 600–774 (FHMHINLELL…NAIVFRKGVE (175 aa)) enclose the PCI domain. Residues 813–862 (RDQGAGARGGRGSGRGGQARGGPRFPGGQQGRRPGGQQFGGGALGGAIKA) are disordered. Over residues 818–862 (GARGGRGSGRGGQARGGPRFPGGQQGRRPGGQQFGGGALGGAIKA) the composition is skewed to gly residues.

The protein belongs to the eIF-3 subunit C family. Component of the eukaryotic translation initiation factor 3 (eIF-3) complex.

The protein resides in the cytoplasm. In terms of biological role, component of the eukaryotic translation initiation factor 3 (eIF-3) complex, which is involved in protein synthesis of a specialized repertoire of mRNAs and, together with other initiation factors, stimulates binding of mRNA and methionyl-tRNAi to the 40S ribosome. The eIF-3 complex specifically targets and initiates translation of a subset of mRNAs involved in cell proliferation. The chain is Eukaryotic translation initiation factor 3 subunit C (nip1) from Neosartorya fischeri (strain ATCC 1020 / DSM 3700 / CBS 544.65 / FGSC A1164 / JCM 1740 / NRRL 181 / WB 181) (Aspergillus fischerianus).